We begin with the raw amino-acid sequence, 590 residues long: Putative laccase-19 (590 aa).

Residues 1–28 form the signal peptide; sequence MEKLSMVTSLLCAITVAVLAVAVVSGEA. Plastocyanin-like domains are found at residues 36–152 and 161–315; these read VVHE…PRDG and KDVP…YAGA. N-linked (GlcNAc...) asparagine glycosylation is found at Asn-41 and Asn-47. Cu cation contacts are provided by His-86 and His-88. An N-linked (GlcNAc...) asparagine glycan is attached at Asn-120. Cu cation-binding residues include His-131 and His-133. 6 N-linked (GlcNAc...) asparagine glycosylation sites follow: Asn-205, Asn-344, Asn-378, Asn-397, Asn-434, and Asn-465. The 143-residue stretch at 424–566 folds into the Plastocyanin-like 3 domain; that stretch reads DFPIRPPRPF…ATAFIVEDGP (143 aa). 8 residues coordinate Cu cation: Asn-483, His-486, His-488, His-545, Cys-546, His-547, His-551, and Met-556. The disordered stretch occupies residues 565 to 590; it reads GPTPETSLPPPPPEFKRCGNNGLSQP.

Belongs to the multicopper oxidase family. It depends on Cu cation as a cofactor.

It is found in the secreted. The protein localises to the extracellular space. It localises to the apoplast. The enzyme catalyses 4 hydroquinone + O2 = 4 benzosemiquinone + 2 H2O. Lignin degradation and detoxification of lignin-derived products. The polypeptide is Putative laccase-19 (LAC19) (Oryza sativa subsp. indica (Rice)).